We begin with the raw amino-acid sequence, 638 residues long: Phenylethylamine oxidase (638 aa).

Residues Met-1–Thr-2 constitute a propeptide that is removed on maturation. Residue Tyr-296–Tyr-307 participates in substrate binding. The active-site Proton acceptor is Asp-298. Cysteines 317 and 343 form a disulfide. Ile-379–Tyr-384 serves as a coordination point for substrate. Tyr-382 acts as the Schiff-base intermediate with substrate; via topaquinone in catalysis. A 2',4',5'-topaquinone modification is found at Tyr-382. Cu cation contacts are provided by His-431, His-433, and His-592.

This sequence belongs to the copper/topaquinone oxidase family. Homodimer. Cu cation is required as a cofactor. It depends on L-topaquinone as a cofactor. In terms of processing, topaquinone (TPQ) is generated by copper-dependent autoxidation of a specific tyrosyl residue.

It carries out the reaction a primary methyl amine + O2 + H2O = an aldehyde + H2O2 + NH4(+). It catalyses the reaction 2-phenylethylamine + O2 + H2O = 2-phenylacetaldehyde + H2O2 + NH4(+). Its function is as follows. Catalyzes the oxidative deamination of phenylethylamine to phenylacetaldehyde with the concomitant production of hydrogen peroxide and ammonia. This chain is Phenylethylamine oxidase, found in Arthrobacter globiformis.